A 963-amino-acid polypeptide reads, in one-letter code: Unconventional myosin-XIX (963 aa).

The 724-residue stretch at 35-758 (HQLDDLTKVN…MLELLECGRA (724 aa)) folds into the Myosin motor domain. Position 132–139 (132–139 (GESGAGKT)) interacts with ATP. Residues 602-624 (LEQLLQVLHNTTPHYIRCIKPNS) are actin-binding. IQ domains follow at residues 762–782 (EQCA…KQEK) and 783–812 (QRRA…AATV). Positions 829–963 (SKELDGMEEK…LLESHRPVQV (135 aa)) are myMOMA region.

The protein belongs to the TRAFAC class myosin-kinesin ATPase superfamily. Myosin family. Myosin is a hexamer of 2 heavy chains and 4 light chains: interacts with myosin light chains MYL9 and MYL12B.

The protein resides in the mitochondrion outer membrane. The protein localises to the cytoplasm. It is found in the cytoskeleton. In terms of biological role, actin-based motor molecule with ATPase activity that localizes to the mitochondrion outer membrane. Motor protein that moves towards the plus-end of actin filaments. Required for mitochondrial inheritance during mitosis. May be involved in mitochondrial transport or positioning. This is Unconventional myosin-XIX from Mus musculus (Mouse).